The primary structure comprises 230 residues: Somatolactin (230 aa).

A signal peptide spans 1-25 (MHTKVLQQGLWALLLWPHLFTVSVP). 3 disulfides stabilise this stretch: Cys-28–Cys-38, Cys-88–Cys-204, and Cys-221–Cys-229. N-linked (GlcNAc...) asparagine glycosylation occurs at Asn-144.

This sequence belongs to the somatotropin/prolactin family.

It localises to the secreted. Functionally, selectively regulates proliferation and morphogenesis of neural-crest derived pigment cells. This Oryzias latipes (Japanese rice fish) protein is Somatolactin.